Reading from the N-terminus, the 455-residue chain is Gastric inhibitory polypeptide receptor (455 aa).

An N-terminal signal peptide occupies residues 1 to 18 (MPLRLLLLLLWLWGLSLQ). Residues 19–135 (RAETDSEGQT…DQKLILERLQ (117 aa)) are Extracellular-facing. Disulfide bonds link Cys43–Cys67, Cys58–Cys100, and Cys81–Cys115. N-linked (GlcNAc...) asparagine glycans are attached at residues Asn59, Asn69, and Asn74. The chain crosses the membrane as a helical span at residues 136-158 (VVYTVGYSLSLATLLLALLILSL). Residues 159 to 166 (FRRLHCTR) are Cytoplasmic-facing. Residues 167 to 186 (NYIHMNLFTSFMLRAGAILT) traverse the membrane as a helical segment. Residues 187-214 (RDQLLPPLGPYTGNQTPTLWNQALAACR) are Extracellular-facing. The chain crosses the membrane as a helical span at residues 215–239 (TAQILTQYCVGANYTWLLVEGVYLH). The Cytoplasmic portion of the chain corresponds to 240–251 (HLLVVVRRSEKG). A helical membrane pass occupies residues 252-275 (HFRCYLLLGWGAPALFVIPWVIVR). At 276-290 (YLYENTQCWERNEVK) the chain is on the extracellular side. Residues 291-316 (AIWWIIRTPILITILINFLIFIRILG) form a helical membrane-spanning segment. At 317–338 (ILVSKLRTRQMRCPDYRLRLAR) the chain is on the cytoplasmic side. The chain crosses the membrane as a helical span at residues 339 to 359 (STLTLMPLLGVHEVVFAPVTE). Residues 360-374 (EQAEGSLRFAKLAFE) lie on the Extracellular side of the membrane. A helical membrane pass occupies residues 375-395 (IFLSSFQGFLVSVLYCFINKE). Residues 396–455 (VQSEIRRLRLSLQEQCPRPHLGQAPRAVPLSSAPQEAAIRNALPSGMLHVPGDEVLESYC) are Cytoplasmic-facing.

Belongs to the G-protein coupled receptor 2 family. In terms of assembly, may form homodimers and heterodimers with GLP1R. In terms of processing, N-glycosylation is required for cell surface expression and lengthens receptor half-life by preventing degradation in the ER. Present in the pancreas as well as the gut, adipose tissue, heart, pituitary, and inner layers of the adrenal cortex, whereas it is not found in kidney, spleen, or liver. It is also expressed in several brain regions, including the cerebral cortex, hippocampus, and olfactory bulb.

The protein localises to the cell membrane. Its function is as follows. This is a receptor for GIP. The activity of this receptor is mediated by G proteins which activate adenylyl cyclase. This Rattus norvegicus (Rat) protein is Gastric inhibitory polypeptide receptor (Gipr).